Reading from the N-terminus, the 245-residue chain is Flavin-dependent thymidylate synthase (245 aa).

Residues 5–210 (IRVKLVNYTK…ELRPIIKWAK (206 aa)) enclose the ThyX domain. Residues Ser59, 83 to 85 (RHR), and Gln91 each bind FAD. Residues 80 to 83 (QLVR), 91 to 95 (QQSQR), and Arg149 contribute to the dUMP site. Positions 83–93 (RHRLASYTQQS) match the ThyX motif motif. FAD contacts are provided by residues 165-167 (NLR) and His171. Position 176 (Arg176) interacts with dUMP. Arg176 (involved in ionization of N3 of dUMP, leading to its activation) is an active-site residue.

Belongs to the thymidylate synthase ThyX family. As to quaternary structure, homotetramer. The cofactor is FAD.

It carries out the reaction dUMP + (6R)-5,10-methylene-5,6,7,8-tetrahydrofolate + NADPH + H(+) = dTMP + (6S)-5,6,7,8-tetrahydrofolate + NADP(+). It participates in pyrimidine metabolism; dTTP biosynthesis. Its function is as follows. Catalyzes the reductive methylation of 2'-deoxyuridine-5'-monophosphate (dUMP) to 2'-deoxythymidine-5'-monophosphate (dTMP) while utilizing 5,10-methylenetetrahydrofolate (mTHF) as the methyl donor, and NADPH and FADH(2) as the reductant. In Thermococcus kodakarensis (strain ATCC BAA-918 / JCM 12380 / KOD1) (Pyrococcus kodakaraensis (strain KOD1)), this protein is Flavin-dependent thymidylate synthase.